A 469-amino-acid chain; its full sequence is Maintenance of mitochondrial morphology protein 1 (469 aa).

The Lumenal portion of the chain corresponds to 1–25; sequence MADEVPTAVPLATPAGSSSLSFTQG. Residues 26–46 traverse the membrane as a helical segment; the sequence is FLLGQLSIAILIFCFIKFFIF. Over 47-469 the chain is Cytoplasmic; it reads GEPPSADDRA…GMRWRGALPR (423 aa). Residues 124–363 form the SMP-LTD domain; that stretch reads QPESLDWFNV…EPRFQQIVLP (240 aa). Residues 266-299 show a composition bias toward low complexity; it reads SSSPPSTTAPMPSPTSNTHRSSSPSRPASSSGAP. Disordered stretches follow at residues 266-304 and 426-469; these read SSSP…HRPT and EAEG…ALPR. Composition is skewed to basic and acidic residues over residues 426 to 439 and 449 to 462; these read EAEG…EIRA and ERSR…DGMR.

Belongs to the MMM1 family. As to quaternary structure, homodimer. Component of the ER-mitochondria encounter structure (ERMES) or MDM complex, composed of mmm1, MDM10, MDM12 and MDM34. A mmm1 homodimer associates with one molecule of MDM12 on each side in a pairwise head-to-tail manner, and the SMP-LTD domains of mmm1 and MDM12 generate a continuous hydrophobic tunnel for phospholipid trafficking.

The protein localises to the endoplasmic reticulum membrane. Component of the ERMES/MDM complex, which serves as a molecular tether to connect the endoplasmic reticulum (ER) and mitochondria. Components of this complex are involved in the control of mitochondrial shape and protein biogenesis, and function in nonvesicular lipid trafficking between the ER and mitochondria. The MDM12-mmm1 subcomplex functions in the major beta-barrel assembly pathway that is responsible for biogenesis of all outer membrane beta-barrel proteins, and acts in a late step after the SAM complex. The MDM10-MDM12-mmm1 subcomplex further acts in the TOM40-specific pathway after the action of the MDM12-mmm1 complex. Essential for establishing and maintaining the structure of mitochondria and maintenance of mtDNA nucleoids. The chain is Maintenance of mitochondrial morphology protein 1 from Pyrenophora tritici-repentis (strain Pt-1C-BFP) (Wheat tan spot fungus).